The chain runs to 393 residues: Probable protein phosphatase 2C 68 (393 aa).

Positions 56 to 359 (DFSIAVVQAN…DDITVVVIFI (304 aa)) constitute a PPM-type phosphatase domain. D87, G88, D291, and D350 together coordinate Mn(2+).

This sequence belongs to the PP2C family. Mg(2+) is required as a cofactor. Requires Mn(2+) as cofactor.

The catalysed reaction is O-phospho-L-seryl-[protein] + H2O = L-seryl-[protein] + phosphate. It catalyses the reaction O-phospho-L-threonyl-[protein] + H2O = L-threonyl-[protein] + phosphate. May dephosphorylate and repress plasma membrane H(+)-ATPases (PM H(+)-ATPases, e.g. AHA1 and AHA2), thus influencing negatively plant growth and fitness. This is Probable protein phosphatase 2C 68 from Arabidopsis thaliana (Mouse-ear cress).